The primary structure comprises 548 residues: Kinetochore and Eb1-associated basic protein (548 aa).

2 disordered regions span residues 1–51 (MSSM…PKHP) and 82–181 (YRSS…IRPK). 3 stretches are compositionally biased toward basic and acidic residues: residues 20 to 29 (RTKELLERQR), 104 to 116 (RTWE…EFRS), and 127 to 141 (PRPR…DLRS). An important for kinetochore and microtubule localization region spans residues 100 to 253 (QNRQRTWEGP…TTSKRKLDFK (154 aa)). Residues 144–155 (QGTPATKIPSQR) show a composition bias toward polar residues. Positions 149–152 (TKIP) match the SXIP motif 1 motif. Basic and acidic residues predominate over residues 156 to 165 (NPKENQELSK). A compositionally biased stretch (polar residues) spans 166–175 (SHTCIPSSEP). The short motif at 168–171 (TCIP) is the SXIP motif 2 element. A CH (calponin-homology)-like region, which is not required for kinetochore and microtubule localization region spans residues 237–372 (SDKGIKLTTS…MCALPVVSEK (136 aa)). Residues 386–457 (YDVMSLQQKF…LQLQRLRLQE (72 aa)) adopt a coiled-coil conformation.

As to quaternary structure, interacts with Eb1 via the two SxIP motifs; the interaction is not required for kebab kinetochore localization.

It localises to the cytoplasm. The protein resides in the perinuclear region. Its subcellular location is the chromosome. The protein localises to the centromere. It is found in the kinetochore. It localises to the cytoskeleton. The protein resides in the spindle. This Drosophila melanogaster (Fruit fly) protein is Kinetochore and Eb1-associated basic protein.